The chain runs to 107 residues: MNKKELFDAFDGFSQNLMVTLAEIEAMKKQVQSLVEENTILRLENTKLRERLSHLEHETAAKNPSKQRKDHLEGIYDEGFHICNFFYGQRRENDEECMFCRELLDRK.

Zn(2+)-binding residues include histidine 81, cysteine 83, cysteine 97, and cysteine 100.

The protein belongs to the YabA family. As to quaternary structure, homotetramer. Interacts with both DnaA and DnaN, acting as a bridge between these two proteins. Zn(2+) serves as cofactor.

The protein resides in the cytoplasm. The protein localises to the nucleoid. Its function is as follows. Involved in control of chromosome replication initiation. Inhibits the cooperative binding of DnaA to the oriC region, thus negatively regulating initiation of chromosome replication. Inhibits the ability of DnaA-ATP to form a helix on DNA; does not disassemble preformed DnaA-DNA helices. Decreases the residence time of DnaA on the chromosome at its binding sites (oriC, replication forks and promoter-binding sites). Tethers DnaA to the replication machinery via the DNA polymerase beta sliding clamp subunit (dnaN). Associates with oriC and other DnaA targets on the chromosome in a DnaA-dependent manner. The sequence is that of Replication initiation control protein YabA from Streptococcus pyogenes serotype M3 (strain ATCC BAA-595 / MGAS315).